The primary structure comprises 258 residues: 5'-nucleotidase SurE (258 aa).

A divalent metal cation-binding residues include D8, D9, S40, and N92.

This sequence belongs to the SurE nucleotidase family. The cofactor is a divalent metal cation.

The protein localises to the cytoplasm. It catalyses the reaction a ribonucleoside 5'-phosphate + H2O = a ribonucleoside + phosphate. Its function is as follows. Nucleotidase that shows phosphatase activity on nucleoside 5'-monophosphates. The chain is 5'-nucleotidase SurE from Brucella anthropi (strain ATCC 49188 / DSM 6882 / CCUG 24695 / JCM 21032 / LMG 3331 / NBRC 15819 / NCTC 12168 / Alc 37) (Ochrobactrum anthropi).